A 262-amino-acid chain; its full sequence is Ferric siderophore reductase (262 aa).

4 residues coordinate [2Fe-2S] cluster: Cys244, Cys245, Cys256, and Cys259.

Monomer. It depends on [2Fe-2S] cluster as a cofactor.

The protein resides in the cytoplasm. It localises to the cell inner membrane. With respect to regulation, displays pH dependent redox properties. SufD is necessary for the stability of FhuF. In terms of biological role, siderophore-iron reductase which is involved in iron removal from the hydroxamate-type siderophores coprogen, ferrichrome and ferrioxamine B after their transport into the cell. Binds both the iron-loaded and the apo forms of ferrichrome. This chain is Ferric siderophore reductase (fhuF), found in Escherichia coli (strain K12).